Consider the following 298-residue polypeptide: uncharacterized protein (298 aa).

This is an uncharacterized protein from Ictalurid herpesvirus 1 (strain Auburn) (IcHV-1).